Consider the following 277-residue polypeptide: Methyltransferase adrK (277 aa).

Residues 123 to 124, 150 to 151, and 151 to 152 each bind S-adenosyl-L-methionine; these read DL, DV, and VL.

The protein belongs to the class I-like SAM-binding methyltransferase superfamily. In terms of assembly, homodimer.

Its pathway is secondary metabolite biosynthesis; terpenoid biosynthesis. Methyltransferase; part of the gene cluster that mediates the biosynthesis of andrastins, meroterpenoid compounds that exhibit inhibitory activity against ras farnesyltransferase, suggesting that they could be promising leads for antitumor agents. The first step of the pathway is the synthesis of 3,5-dimethylorsellinic acid (DMOA) by the polyketide synthase adrD via condensation of one acetyl-CoA starter unit with 3 malonyl-CoA units and 2 methylations. DMAO is then converted to farnesyl-DMAO by the prenyltransferase adrG. The methyltransferase adrK catalyzes the methylation of the carboxyl group of farnesyl-DMAO to farnesyl-DMAO methyl ester which is further converted to epoxyfarnesyl-DMAO methyl ester by the FAD-dependent monooxygenase adrH. The terpene cyclase adrI then catalyzes the carbon skeletal rearrangement to generate the andrastin E, the first compound in the pathway having the andrastin scaffold, with the tetracyclic ring system. The post-cyclization tailoring enzymes adrF, adrE, adrJ, and adrA, are involved in the conversion of andrastin E into andrastin A. The short chain dehydrogenase adrF is responsible for the oxidation of the C-3 a hydroxyl group of andrastin E to yield the corresponding ketone, andrastin D. The ketoreductase adrE stereoselectively reduces the carbonyl moiety to reverse the stereochemistry of the C-3 position to yield andrastin F. The acetyltransferase adrJ is the acetyltransferase that attaches the acetyl group to the C-3 hydroxyl group of andrastin F to yield andrastin C. Finally, the cytochrome P450 monooxygenase adrA catalyzes two sequential oxidation reactions of the C-23 methyl group, to generate the corresponding alcohol andrastin B, and aldehyde andrastin A. The protein is Methyltransferase adrK of Penicillium rubens (strain ATCC 28089 / DSM 1075 / NRRL 1951 / Wisconsin 54-1255) (Penicillium chrysogenum).